A 648-amino-acid polypeptide reads, in one-letter code: Solute carrier family 23 member 2 (648 aa).

The interval 1-21 (MMGIGKNTASKSVEAGGSTEG) is disordered. The Cytoplasmic segment spans residues 9–110 (ASKSVEAGGS…LCIFLGLQHY (102 aa)). Phosphoserine is present on serine 70. The residue at position 75 (threonine 75) is a Phosphothreonine. Serine 78 carries the post-translational modification Phosphoserine. Threonine 79 is subject to Phosphothreonine. Serine 81 carries the post-translational modification Phosphoserine. The chain crosses the membrane as a helical span at residues 111–131 (LTCFSGTIAVPFLLADAMCVG). Residues 132 to 139 (DDQWATSQ) are Extracellular-facing. A helical membrane pass occupies residues 140-160 (LIGTIFFCVGITTLLQTTFGC). A topological domain (cytoplasmic) is located at residue arginine 161. A helical membrane pass occupies residues 162–182 (LPLFQASAFAFLAPARAILSL). At 183-216 (DKWKCNTTEITVANGTAELLEHIWHPRIQEIQGA) the chain is on the extracellular side. Residues asparagine 188 and asparagine 196 are each glycosylated (N-linked (GlcNAc...) asparagine). A helical membrane pass occupies residues 217–237 (IIMSSLIEVVIGLLGLPGALL). Topologically, residues 238-264 (RYIGPLTITPTVALIGLSGFQAAGERA) are cytoplasmic. A helical membrane pass occupies residues 265-282 (GKHWGIAMLTIFLVLLFS). The Extracellular portion of the chain corresponds to 283–286 (QYAR). The helical intramembrane region spans 287–300 (NVKFPLPIYKSKKG). At 301–307 (WTAYKFQ) the chain is on the extracellular side. A helical transmembrane segment spans residues 308–328 (LFKMFPIILAILVSWLLCFIF). The Cytoplasmic portion of the chain corresponds to 329-369 (TVTDVFPSNSTDYGYYARTDARKGVLLVAPWFKVPYPFQWG). The chain crosses the membrane as a helical span at residues 370 to 390 (MPTVSAAGVIGMLSAVVASII). Topologically, residues 391–415 (ESIGDYYACARLSCAPPPPIHAINR) are extracellular. Residues 416–436 (GIFVEGLSCVLDGIFGTGNGS) traverse the membrane as a helical segment. The Cytoplasmic segment spans residues 437–459 (TSSSPNIGVLGITKVGSRRVIQY). A helical membrane pass occupies residues 460 to 480 (GAALMLGLGMVGKFSALFASL). The Extracellular segment spans residues 481-483 (PDP). Residues 484 to 504 (VLGALFCTLFGMITAVGLSNL) form a helical membrane-spanning segment. Residues 505–514 (QFIDLNSSRN) lie on the Cytoplasmic side of the membrane. The helical transmembrane segment at 515–535 (LFVLGFSIFFGLVLPSYLRQN) threads the bilayer. Residues 536–545 (PLVTGITGID) lie on the Extracellular side of the membrane. A helical transmembrane segment spans residues 546-566 (QILNVLLTTAMFVGGCVAFIL). Topologically, residues 567–648 (DNTIPGTPEE…SSDKDSQATV (82 aa)) are cytoplasmic. Threonine 647 bears the Phosphothreonine mark.

Belongs to the nucleobase:cation symporter-2 (NCS2) (TC 2.A.40) family. Interacts with CLSTN3. In terms of processing, phosphorylated. As to expression, expressed in metabolically active and specialized tissues, including high expression in brain and adrenals. Detected in a wide range of tissues. Expression in kidney is almost undetectable.

It localises to the cell membrane. It catalyses the reaction L-ascorbate(out) + 2 Na(+)(out) = L-ascorbate(in) + 2 Na(+)(in). Sodium/ascorbate cotransporter. Mediates electrogenic uptake of vitamin C, with a stoichiometry of 2 Na(+) for each ascorbate. The sequence is that of Solute carrier family 23 member 2 (Slc23a2) from Mus musculus (Mouse).